Reading from the N-terminus, the 121-residue chain is Small ribosomal subunit protein uS13 (121 aa).

A disordered region spans residues 89–121 (RRHRMSLPVRGQRTRTNARTRRGSRKTVAGRKK). Basic residues predominate over residues 100-121 (QRTRTNARTRRGSRKTVAGRKK).

The protein belongs to the universal ribosomal protein uS13 family. As to quaternary structure, part of the 30S ribosomal subunit. Forms a loose heterodimer with protein S19. Forms two bridges to the 50S subunit in the 70S ribosome.

In terms of biological role, located at the top of the head of the 30S subunit, it contacts several helices of the 16S rRNA. In the 70S ribosome it contacts the 23S rRNA (bridge B1a) and protein L5 of the 50S subunit (bridge B1b), connecting the 2 subunits; these bridges are implicated in subunit movement. Contacts the tRNAs in the A and P-sites. The sequence is that of Small ribosomal subunit protein uS13 from Prochlorococcus marinus subsp. pastoris (strain CCMP1986 / NIES-2087 / MED4).